Consider the following 588-residue polypeptide: Urease subunit alpha (588 aa).

The Urease domain maps to Gly-149–Phe-588. Positions 154, 156, and 237 each coordinate Ni(2+). The residue at position 237 (Lys-237) is an N6-carboxylysine. His-239 contributes to the substrate binding site. Residues His-266 and His-292 each coordinate Ni(2+). The active-site Proton donor is the His-340. Asp-380 contributes to the Ni(2+) binding site.

Belongs to the metallo-dependent hydrolases superfamily. Urease alpha subunit family. As to quaternary structure, heterotrimer of UreA (gamma), UreB (beta) and UreC (alpha) subunits. Three heterotrimers associate to form the active enzyme. Requires Ni cation as cofactor. Post-translationally, carboxylation allows a single lysine to coordinate two nickel ions.

It is found in the cytoplasm. The catalysed reaction is urea + 2 H2O + H(+) = hydrogencarbonate + 2 NH4(+). It functions in the pathway nitrogen metabolism; urea degradation; CO(2) and NH(3) from urea (urease route): step 1/1. The sequence is that of Urease subunit alpha from Opitutus terrae (strain DSM 11246 / JCM 15787 / PB90-1).